Consider the following 310-residue polypeptide: Oxygen-dependent coproporphyrinogen-III oxidase (310 aa).

Residue Ser-97 coordinates substrate. Positions 101 and 111 each coordinate a divalent metal cation. The active-site Proton donor is His-111. 113-115 (NFR) provides a ligand contact to substrate. A divalent metal cation is bound by residues His-150 and His-180. Residues 245 to 280 (YVEFNLLYDRGTRFGLEFGGRTESILMSLPPRVVWR) are important for dimerization. A substrate-binding site is contributed by 263-265 (GGR).

This sequence belongs to the aerobic coproporphyrinogen-III oxidase family. In terms of assembly, homodimer. A divalent metal cation serves as cofactor.

The protein localises to the cytoplasm. It catalyses the reaction coproporphyrinogen III + O2 + 2 H(+) = protoporphyrinogen IX + 2 CO2 + 2 H2O. It participates in porphyrin-containing compound metabolism; protoporphyrin-IX biosynthesis; protoporphyrinogen-IX from coproporphyrinogen-III (O2 route): step 1/1. Functionally, involved in the heme biosynthesis. Catalyzes the aerobic oxidative decarboxylation of propionate groups of rings A and B of coproporphyrinogen-III to yield the vinyl groups in protoporphyrinogen-IX. The protein is Oxygen-dependent coproporphyrinogen-III oxidase of Coxiella burnetii (strain RSA 331 / Henzerling II).